We begin with the raw amino-acid sequence, 616 residues long: Chaperone protein DnaK (616 aa).

The residue at position 174 (T174) is a Phosphothreonine; by autocatalysis. The tract at residues 576-616 (QASAPGAGPEGASGGFGGENKKDDNVVDADYTVIDDDKKKT) is disordered. The segment covering 583–593 (GPEGASGGFGG) has biased composition (gly residues).

The protein belongs to the heat shock protein 70 family.

Functionally, acts as a chaperone. In Heliobacterium modesticaldum (strain ATCC 51547 / Ice1), this protein is Chaperone protein DnaK.